A 322-amino-acid polypeptide reads, in one-letter code: Arginase-1 (322 aa).

The segment at 1–27 is disordered; sequence MSFKSQSIGIIGAPFSKGQPRGGVEEG. Position 7 is a phosphoserine (Ser7). N6-succinyllysine is present on Lys17. Residue Ser72 is modified to Phosphoserine. Lys75 is subject to N6-succinyllysine. Residues His101, Asp124, His126, and Asp128 each coordinate Mn(2+). Residues 126 to 130 and 137 to 139 contribute to the substrate site; these read HTDIN and TGN. Position 163 is a phosphoserine (Ser163). Position 183 (Asp183) interacts with substrate. Ser217 carries the phosphoserine modification. Asp232 and Asp234 together coordinate Mn(2+). Residues Thr246 and Glu277 each contribute to the substrate site.

This sequence belongs to the arginase family. Homotrimer. Interacts with CMTM6. Requires Mn(2+) as cofactor.

The protein localises to the cytoplasm. The catalysed reaction is L-arginine + H2O = urea + L-ornithine. Its pathway is nitrogen metabolism; urea cycle; L-ornithine and urea from L-arginine: step 1/1. The sequence is that of Arginase-1 (ARG1) from Sus scrofa (Pig).